The primary structure comprises 366 residues: MEGLVLLKALVTRLLFLLHSLVAVWRVTWVKEEHRYWLLALLNLLLVLETVLTLKFKRGRGYKWLSPAIFVYLVNIMPSLWLLEMHHGNQYCSTQSERMAQNFSRRGDVNQTLSSHRATNGMGNILELARGFVDNLSMVCEPVWTLGLHQTLLLILIIGRWLLPIGGTITRDQLSELLLMFVGTAADILEFTTETLKENNVRTNPTLVSGILVVWTWSMLQFPLDLAVQLKLVCPASVKARGFLRVFLCQYSADLWAIGLSFFIQDGPFLVVRLVLMIYFKVINHMLVFFAVKNSLVMALHFYRLVALIMATRDFMRDHPESPKPEHSGPDQPSESGPSEWEDASPEALPLRTSPVTSEESYPTTP.

3 helical membrane passes run 4–24 (LVLL…LVAV), 36–56 (YWLL…TLKF), and 64–84 (WLSP…WLLE). A glycan (N-linked (GlcNAc...) asparagine) is linked at Asn110. The next 5 helical transmembrane spans lie at 138–158 (MVCE…ILII), 176–196 (ELLL…TETL), 208–228 (VSGI…DLAV), 258–278 (IGLS…VLMI), and 282–302 (VINH…ALHF). Residues 319–329 (HPESPKPEHSG) are compositionally biased toward basic and acidic residues. The segment at 319-366 (HPESPKPEHSGPDQPSESGPSEWEDASPEALPLRTSPVTSEESYPTTP) is disordered. Over residues 354-366 (SPVTSEESYPTTP) the composition is skewed to polar residues.

It localises to the membrane. The polypeptide is Transmembrane protein 26 (Tmem26) (Mus musculus (Mouse)).